The sequence spans 387 residues: Patatin-08 (387 aa).

Residues 1–23 (MATTKSFLILIVMILATTSSTFA) form the signal peptide. The PNPLA domain occupies 32–230 (LSIDGGGIKG…TVADPALLSI (199 aa)). The GXGXXG signature appears at 36–41 (GGGIKG). Positions 75-79 (GTSTG) match the GXSXG motif. The active-site Nucleophile is Ser-77. Asn-115 carries an N-linked (GlcNAc...) asparagine glycan. The active-site Proton acceptor is the Asp-216. Positions 216–218 (DGA) match the DGA/G motif. Residues 361-385 (ETYEEALKRFAKLLSDRKKLRANKA) are a coiled coil.

Belongs to the patatin family. In terms of tissue distribution, tuber.

The protein localises to the vacuole. Probable lipolytic acyl hydrolase (LAH), an activity which is thought to be involved in the response of tubers to pathogens. This Solanum tuberosum (Potato) protein is Patatin-08.